A 328-amino-acid polypeptide reads, in one-letter code: Eukaryotic translation initiation factor 3 subunit I (328 aa).

5 WD repeats span residues Gly8–Arg49, Gly50–Thr89, Asp146–Gln185, Gly191–Thr230, and Gly288–Lys327.

It belongs to the eIF-3 subunit I family. In terms of assembly, component of the eukaryotic translation initiation factor 3 (eIF-3) complex.

Its subcellular location is the cytoplasm. Functionally, component of the eukaryotic translation initiation factor 3 (eIF-3) complex, which is involved in protein synthesis of a specialized repertoire of mRNAs and, together with other initiation factors, stimulates binding of mRNA and methionyl-tRNAi to the 40S ribosome. The eIF-3 complex specifically targets and initiates translation of a subset of mRNAs involved in cell proliferation. This is Eukaryotic translation initiation factor 3 subunit I (TIF3I1) from Arabidopsis thaliana (Mouse-ear cress).